A 1684-amino-acid polypeptide reads, in one-letter code: Protein Wiz (1684 aa).

Positions 1-77 (MEGLLAGGLA…PGLSEALPRA (77 aa)) are disordered. Residues 13–24 (DHPRGPAPREDI) show a composition bias toward basic and acidic residues. 5 C2H2-type zinc fingers span residues 308–330 (FPCI…MSQH), 345–367 (LACS…WQLH), 454–477 (NTCV…RLVH), 734–756 (RKCP…VRGH), and 802–824 (MRCD…ARAH). Residues 854-876 (LPPSPLGREPGGPPRSFLTSRRP) form a disordered region. The C2H2-type 6 zinc-finger motif lies at 903–925 (TTCEVCGACFETRKGLSSHARSH). Residues K916, K972, K988, K1000, and K1021 each participate in a glycyl lysine isopeptide (Lys-Gly) (interchain with G-Cter in SUMO2) cross-link. The interval 1005 to 1072 (FSAKGLTHPS…PLNLTSGPEP (68 aa)) is disordered. A Phosphoserine modification is found at S1029. T1031 is modified (phosphothreonine). Glycyl lysine isopeptide (Lys-Gly) (interchain with G-Cter in SUMO2) cross-links involve residues K1033 and K1038. Residues S1039 and S1045 each carry the phosphoserine modification. A compositionally biased stretch (polar residues) spans 1040–1057 (PQLSLSPRPTSPKAQWPQ). T1049 carries the phosphothreonine modification. 2 positions are modified to phosphoserine: S1050 and S1058. An interaction with CTBP1 and CTBP2 1 region spans residues 1063–1067 (PLNLT). Residues 1076-1098 (IRCEFCGEFFENRKGLSSHARSH) form a C2H2-type 7 zinc finger. A Glycyl lysine isopeptide (Lys-Gly) (interchain with G-Cter in SUMO2) cross-link involves residue K1089. A phosphoserine mark is found at S1112 and S1139. The tract at residues 1127 to 1208 (SRPGGHLHPP…GLATPSLPKK (82 aa)) is disordered. Glycyl lysine isopeptide (Lys-Gly) (interchain with G-Cter in SUMO2) cross-links involve residues K1141 and K1145. A phosphoserine mark is found at S1155, S1160, and S1167. Glycyl lysine isopeptide (Lys-Gly) (interchain with G-Cter in SUMO2) cross-links involve residues K1171 and K1172. S1179 and S1184 each carry phosphoserine. N6,N6,N6-trimethyllysine; by EHMT2; alternate is present on K1195. Residue K1195 is modified to N6,N6-dimethyllysine; by EHMT2; alternate. A Glycyl lysine isopeptide (Lys-Gly) (interchain with G-Cter in SUMO2) cross-link involves residue K1210. The segment at 1247–1251 (PLNLS) is interaction with CTBP1 and CTBP2 2. The C2H2-type 8 zinc-finger motif lies at 1260–1282 (IRCEFCGEFFENRKGLSSHARSH). A Glycyl lysine isopeptide (Lys-Gly) (interchain with G-Cter in SUMO2) cross-link involves residue K1273. Residue S1296 is modified to Phosphoserine. K1315 participates in a covalent cross-link: Glycyl lysine isopeptide (Lys-Gly) (interchain with G-Cter in SUMO2). A disordered region spans residues 1320 to 1384 (AGDLAPALTE…SKPSAASYLG (65 aa)). A compositionally biased stretch (low complexity) spans 1335–1351 (AAPGALHSPLPLSPLAS). S1342 and S1347 each carry phosphoserine. Glycyl lysine isopeptide (Lys-Gly) (interchain with G-Cter in SUMO2) cross-links involve residues K1376, K1389, K1403, K1405, and K1415. A C2H2-type 9 zinc finger spans residues 1430–1452 (ACCELCGLYFENRKALASHARAH). Residues K1481, K1497, and K1510 each participate in a glycyl lysine isopeptide (Lys-Gly) (interchain with G-Cter in SUMO2) cross-link. Disordered regions lie at residues 1496–1587 (TKKF…GEEV) and 1592–1611 (QKLE…PSLV). S1550 is subject to Phosphoserine. K1556 participates in a covalent cross-link: Glycyl lysine isopeptide (Lys-Gly) (interchain with G-Cter in SUMO1); alternate. K1556 is covalently cross-linked (Glycyl lysine isopeptide (Lys-Gly) (interchain with G-Cter in SUMO2); alternate). A compositionally biased stretch (basic and acidic residues) spans 1556–1574 (KSEEHQRQNINKFERRQAR). Glycyl lysine isopeptide (Lys-Gly) (interchain with G-Cter in SUMO2) cross-links involve residues K1567 and K1593. Over residues 1599 to 1611 (QPPPRVRPVPSLV) the composition is skewed to pro residues. The C2H2-type 10 zinc finger occupies 1629–1655 (LKCRFCEVEFQGPLSIQEEWVRHLQRH). The tract at residues 1662–1684 (SKADPPPEEPQAPQAQTAAVEAP) is disordered. Residue K1663 forms a Glycyl lysine isopeptide (Lys-Gly) (interchain with G-Cter in SUMO2) linkage. The segment covering 1672–1684 (QAPQAQTAAVEAP) has biased composition (low complexity).

The protein belongs to the krueppel C2H2-type zinc-finger protein family. In terms of assembly, part of a complex containing at least CDYL, REST, WIZ, SETB1, EHMT1 and EHMT2. Interacts with EHMT1, EHMT2, CTBP1 and CTBP2. According to PubMed:9795207, isoform L and isoform S are brain-specific. According to PubMed:16702210, isoform S is ubiquitously expressed.

The protein localises to the nucleus. Functionally, may link EHMT1 and EHMT2 histone methyltransferases to the CTBP corepressor machinery. May be involved in EHMT1-EHMT2 heterodimer formation and stabilization. This Mus musculus (Mouse) protein is Protein Wiz (Wiz).